Here is a 400-residue protein sequence, read N- to C-terminus: tRNA(Met) cytidine acetate ligase (400 aa).

ATP-binding positions include 7-20, Gly101, Asn159, and 184-185; these read IVEY…HLYH and RI.

Belongs to the TmcAL family.

It is found in the cytoplasm. The enzyme catalyses cytidine(34) in elongator tRNA(Met) + acetate + ATP = N(4)-acetylcytidine(34) in elongator tRNA(Met) + AMP + diphosphate. In terms of biological role, catalyzes the formation of N(4)-acetylcytidine (ac(4)C) at the wobble position of elongator tRNA(Met), using acetate and ATP as substrates. First activates an acetate ion to form acetyladenylate (Ac-AMP) and then transfers the acetyl group to tRNA to form ac(4)C34. This Caldicellulosiruptor bescii (strain ATCC BAA-1888 / DSM 6725 / KCTC 15123 / Z-1320) (Anaerocellum thermophilum) protein is tRNA(Met) cytidine acetate ligase.